We begin with the raw amino-acid sequence, 179 residues long: ATP synthase subunit delta (179 aa).

Belongs to the ATPase delta chain family. As to quaternary structure, F-type ATPases have 2 components, F(1) - the catalytic core - and F(0) - the membrane proton channel. F(1) has five subunits: alpha(3), beta(3), gamma(1), delta(1), epsilon(1). F(0) has three main subunits: a(1), b(2) and c(10-14). The alpha and beta chains form an alternating ring which encloses part of the gamma chain. F(1) is attached to F(0) by a central stalk formed by the gamma and epsilon chains, while a peripheral stalk is formed by the delta and b chains.

It localises to the cell inner membrane. In terms of biological role, f(1)F(0) ATP synthase produces ATP from ADP in the presence of a proton or sodium gradient. F-type ATPases consist of two structural domains, F(1) containing the extramembraneous catalytic core and F(0) containing the membrane proton channel, linked together by a central stalk and a peripheral stalk. During catalysis, ATP synthesis in the catalytic domain of F(1) is coupled via a rotary mechanism of the central stalk subunits to proton translocation. This protein is part of the stalk that links CF(0) to CF(1). It either transmits conformational changes from CF(0) to CF(1) or is implicated in proton conduction. The chain is ATP synthase subunit delta from Delftia acidovorans (strain DSM 14801 / SPH-1).